The chain runs to 191 residues: Elongation factor P (191 aa).

This sequence belongs to the elongation factor P family.

It localises to the cytoplasm. The protein operates within protein biosynthesis; polypeptide chain elongation. Functionally, involved in peptide bond synthesis. Stimulates efficient translation and peptide-bond synthesis on native or reconstituted 70S ribosomes in vitro. Probably functions indirectly by altering the affinity of the ribosome for aminoacyl-tRNA, thus increasing their reactivity as acceptors for peptidyl transferase. In Janthinobacterium sp. (strain Marseille) (Minibacterium massiliensis), this protein is Elongation factor P.